Here is a 214-residue protein sequence, read N- to C-terminus: Probable transaldolase (214 aa).

The Schiff-base intermediate with substrate role is filled by Lys83.

It belongs to the transaldolase family. Type 3B subfamily.

Its subcellular location is the cytoplasm. The enzyme catalyses D-sedoheptulose 7-phosphate + D-glyceraldehyde 3-phosphate = D-erythrose 4-phosphate + beta-D-fructose 6-phosphate. It participates in carbohydrate degradation; pentose phosphate pathway; D-glyceraldehyde 3-phosphate and beta-D-fructose 6-phosphate from D-ribose 5-phosphate and D-xylulose 5-phosphate (non-oxidative stage): step 2/3. Functionally, transaldolase is important for the balance of metabolites in the pentose-phosphate pathway. The chain is Probable transaldolase from Desulfotalea psychrophila (strain LSv54 / DSM 12343).